Here is a 244-residue protein sequence, read N- to C-terminus: tRNA (guanine-N(7)-)-methyltransferase (244 aa).

Residues 1–10 are compositionally biased toward polar residues; it reads MSDTPQSPAQ. Residues 1–20 form a disordered region; that stretch reads MSDTPQSPAQGSLAEHDEAR. Residues glutamate 74, glutamate 99, aspartate 126, and aspartate 149 each coordinate S-adenosyl-L-methionine. Aspartate 149 is an active-site residue. Residues lysine 153, aspartate 185, and 222-225 each bind substrate; that span reads TKFE.

It belongs to the class I-like SAM-binding methyltransferase superfamily. TrmB family.

The catalysed reaction is guanosine(46) in tRNA + S-adenosyl-L-methionine = N(7)-methylguanosine(46) in tRNA + S-adenosyl-L-homocysteine. The protein operates within tRNA modification; N(7)-methylguanine-tRNA biosynthesis. Catalyzes the formation of N(7)-methylguanine at position 46 (m7G46) in tRNA. This Pseudomonas aeruginosa (strain UCBPP-PA14) protein is tRNA (guanine-N(7)-)-methyltransferase.